A 116-amino-acid polypeptide reads, in one-letter code: Large ribosomal subunit protein bL17 (116 aa).

The protein belongs to the bacterial ribosomal protein bL17 family. Part of the 50S ribosomal subunit. Contacts protein L32.

This is Large ribosomal subunit protein bL17 from Sulfurovum sp. (strain NBC37-1).